The following is a 471-amino-acid chain: Glutamate--tRNA ligase (471 aa).

The 'HIGH' region motif lies at 9–19; sequence PSPTGYLHVGG. Residues Cys-98, Cys-100, Cys-125, and Asp-127 each contribute to the Zn(2+) site. Residues 237–241 carry the 'KMSKS' region motif; the sequence is KLSKR. ATP is bound at residue Lys-240.

Belongs to the class-I aminoacyl-tRNA synthetase family. Glutamate--tRNA ligase type 1 subfamily. In terms of assembly, monomer. Requires Zn(2+) as cofactor.

It is found in the cytoplasm. It catalyses the reaction tRNA(Glu) + L-glutamate + ATP = L-glutamyl-tRNA(Glu) + AMP + diphosphate. Catalyzes the attachment of glutamate to tRNA(Glu) in a two-step reaction: glutamate is first activated by ATP to form Glu-AMP and then transferred to the acceptor end of tRNA(Glu). The polypeptide is Glutamate--tRNA ligase (Yersinia pseudotuberculosis serotype IB (strain PB1/+)).